The sequence spans 415 residues: Probable disease resistance protein At5g66890 (415 aa).

The NB-ARC domain maps to 8–43; that stretch reads SFDALPHNLRECFLDMASFLEDQRIIASTIIDLWSA. 6 LRR repeats span residues 229–251, 256–278, 280–303, 304–326, 328–351, and 352–373; these read SLEKLSLWFCHVVDALNELEDVS, SLQEIEIDYCYNLDELPYWISQV, SLKKLSVTNCNKLCRVIEAIGDLR, DLETLRLSSCASLLELPETIDRL, NLRFLDVSGGFQLKNLPLEIGKLK, and KLEKISMKDCYRCELPDSVKNL. A coiled-coil region spans residues 239–260; sequence HVVDALNELEDVSETLQSLQEI.

This sequence belongs to the disease resistance NB-LRR family.

Possible disease resistance protein. The chain is Probable disease resistance protein At5g66890 from Arabidopsis thaliana (Mouse-ear cress).